A 546-amino-acid polypeptide reads, in one-letter code: MLGFVGRVAATSASGALRGLGPSPLPQVKVLLRASPAALQSARDYATQTSPSPKAGAATGRIVAVIGAVVDVQFDEGLPPILNALEVQGRETRLVLEVAQHLGESTVRTIAMDGTEGLVRGQKVLDSGAPIKIPVGPETLGRIMNVIGEPIDERGPIKTKQFAAIHAEAPEFVEMSVEQEILVTGIKVVDLLAPYAKGGKIGLFGGAGVGKTVLIMELINNVAKAHGGYSVFAGVGERTREGNDLYHEMIESGVINLKDATSKVALVYGQMNEPPGARARVALTGLTVAEYFRDQEGQDVLLFIDNIFRFTQAGSEVSALLGRIPSAVGYQPTLATDMGTMQERITTTKKGSITSVQAIYVPADDLTDPAPATTFAHLDATTVLSRAIAELGIYPAVDPLDSTSRIMDPNIVGNEHYDVARGVQKILQDYKSLQDIIAILGMDELSEEDKLTVSRARKIQRFLSQPFQVAEVFTGHMGKLVPLKETIKGFQQILAGEYDHLPEQAFYMVGPIEEAVAKADKLAEEHSATQTSPSPKGAAAXXXRVV.

The transit peptide at 1 to 45 (MLGFVGRVAATSASGALRGLGPSPLPQVKVLLRASPAALQSARDY) directs the protein to the mitochondrion. Residues Lys-123, Lys-132, and Lys-160 each carry the N6-acetyllysine; alternate modification. N6-succinyllysine; alternate occurs at positions 123, 132, and 160. Residue Lys-197 is modified to N6-acetyllysine. Gly-208, Val-209, Gly-210, Lys-211, Thr-212, and Val-213 together coordinate ADP. Gly-208 is an ATP binding site. Residues Gly-208, Val-209, Gly-210, Lys-211, and Thr-212 each contribute to the phosphate site. Positions 210, 211, 212, and 213 each coordinate ATP. Thr-212 contacts Mg(2+). Mg(2+) is bound at residue Glu-237. Residue Arg-238 participates in ATP binding. Lys-258 and Lys-263 each carry N6-acetyllysine; alternate. Lys-258 and Lys-263 each carry N6-succinyllysine; alternate. Thr-311 carries the post-translational modification Phosphothreonine. N6-acetyllysine is present on Lys-425. Ser-432 is modified (phosphoserine). An N6-acetyllysine mark is found at Lys-479 and Lys-484. An N6-acetyllysine; alternate modification is found at Lys-521. N6-succinyllysine; alternate is present on Lys-521. A disordered region spans residues 521-546 (KLAEEHSATQTSPSPKGAAAXXXRVV).

It belongs to the ATPase alpha/beta chains family. Homotrimer. Component of the ATP synthase complex composed at least of ATP5F1A/subunit alpha, ATP5F1B/subunit beta, ATP5MC1/subunit c (homooctomer), MT-ATP6/subunit a, MT-ATP8/subunit 8, ATP5ME/subunit e, ATP5MF/subunit f, ATP5MG/subunit g, ATP5MK/subunit k, ATP5MJ/subunit j, ATP5F1C/subunit gamma, ATP5F1D/subunit delta, ATP5F1E/subunit epsilon, ATP5PF/subunit F6, ATP5PB/subunit b, ATP5PD/subunit d, ATP5PO/subunit OSCP. ATP synthase complex consists of a soluble F(1) head domain (subunits alpha(3) and beta(3)) - the catalytic core - and a membrane F(0) domain - the membrane proton channel (subunits c, a, 8, e, f, g, k and j). These two domains are linked by a central stalk (subunits gamma, delta, and epsilon) rotating inside the F1 region and a stationary peripheral stalk (subunits F6, b, d, and OSCP). Interacts with PPIF. Interacts with BCL2L1 isoform BCL-X(L); the interaction mediates the association of BCL2L1 isoform BCL-X(L) with the mitochondrial membrane F(1)F(0) ATP synthase and enhances neurons metabolic efficiency. Interacts with CLN5 and PPT1. Interacts with S100A1; this interaction increases F1-ATPase activity. Interacts with MTLN. Interacts with TTC5/STRAP; the interaction results in decreased mitochondrial ATP production.

It is found in the mitochondrion inner membrane. The catalysed reaction is ATP + H2O + 4 H(+)(in) = ADP + phosphate + 5 H(+)(out). In terms of biological role, catalytic subunit beta, of the mitochondrial membrane ATP synthase complex (F(1)F(0) ATP synthase or Complex V) that produces ATP from ADP in the presence of a proton gradient across the membrane which is generated by electron transport complexes of the respiratory chain. ATP synthase complex consist of a soluble F(1) head domain - the catalytic core - and a membrane F(1) domain - the membrane proton channel. These two domains are linked by a central stalk rotating inside the F(1) region and a stationary peripheral stalk. During catalysis, ATP synthesis in the catalytic domain of F(1) is coupled via a rotary mechanism of the central stalk subunits to proton translocation. In vivo, can only synthesize ATP although its ATP hydrolase activity can be activated artificially in vitro. With the subunit alpha (ATP5F1A), forms the catalytic core in the F(1) domain. This is ATP synthase F(1) complex catalytic subunit beta, mitochondrial from Canis lupus familiaris (Dog).